Reading from the N-terminus, the 718-residue chain is Ribonuclease J (718 aa).

A disordered region spans residues 1-130; the sequence is MNDSRNRGRK…RGNRGGGRRN (130 aa). 2 stretches are compositionally biased toward low complexity: residues 55 to 91 and 100 to 118; these read AAQG…NNNR and SGNA…NRQG. Positions 220, 222, 224, 225, 287, and 309 each coordinate Zn(2+). Residue 510-514 coordinates substrate; the sequence is HTSGH. His-536 serves as a coordination point for Zn(2+).

This sequence belongs to the metallo-beta-lactamase superfamily. RNA-metabolizing metallo-beta-lactamase-like family. Bacterial RNase J subfamily. Homodimer, may be a subunit of the RNA degradosome. Zn(2+) serves as cofactor.

The protein resides in the cytoplasm. In terms of biological role, an RNase that has 5'-3' exonuclease and possibly endoonuclease activity. Involved in maturation of rRNA and in some organisms also mRNA maturation and/or decay. The chain is Ribonuclease J from Corynebacterium glutamicum (strain ATCC 13032 / DSM 20300 / JCM 1318 / BCRC 11384 / CCUG 27702 / LMG 3730 / NBRC 12168 / NCIMB 10025 / NRRL B-2784 / 534).